The chain runs to 330 residues: Transcription factor TGA5 (330 aa).

The span at 1 to 13 shows a compositional bias: polar residues; the sequence is MGDTSPRTSVSTD. The disordered stretch occupies residues 1–64; the sequence is MGDTSPRTSV…REAARKSRLR (64 aa). Over residues 35–47 the composition is skewed to basic and acidic residues; that stretch reads SSDRSKSKMDQKT. Positions 44–107 constitute a bZIP domain; that stretch reads DQKTLRRLAQ…SSGDQAHSTA (64 aa). 2 coiled-coil regions span residues 45–98 and 211–244; these read QKTL…FISS and EQQS…SLAD. Residues 46–66 are basic motif; it reads KTLRRLAQNREAARKSRLRKK. Residues 72–86 are leucine-zipper; the sequence is LENSRLKLTQLEQEL. One can recognise a DOG1 domain in the interval 111–327; sequence AMAFDVEYRR…RALSSLWLAR (217 aa).

This sequence belongs to the bZIP family. Binds DNA as a dimer. Interaction with the Dof domain protein OBP1 enhances the binding to the ocs element. Interacts with NPR1, NPR3 and NPR4. Predominantly expressed in roots.

It localises to the nucleus. Transcriptional activator that binds specifically to the DNA sequence 5'-TGACG-3'. Recognizes ocs elements like the as-1 motif of the cauliflower mosaic virus 35S promoter. Binding to the as-1-like cis elements mediate auxin- and salicylic acid-inducible transcription. May be involved in the induction of the systemic acquired resistance (SAR) via its interaction with NPR1. Could also bind to the Hex-motif (5'-TGACGTGG-3') another cis-acting element found in plant histone promoters. The sequence is that of Transcription factor TGA5 (TGA5) from Arabidopsis thaliana (Mouse-ear cress).